The following is a 645-amino-acid chain: Cysteine-rich receptor-like protein kinase 10 (645 aa).

The first 27 residues, M1–A27, serve as a signal peptide directing secretion. 2 consecutive Gnk2-homologous domains span residues Q28–F132 and S140–F251. At Q28–S283 the chain is on the extracellular side. N-linked (GlcNAc...) asparagine glycosylation is found at N39 and N91. 2 disulfide bridges follow: C86/C95 and C98/C123. 2 N-linked (GlcNAc...) asparagine glycosylation sites follow: N151 and N169. Cystine bridges form between C204–C213 and C216–C242. Residues A284–F304 form a helical membrane-spanning segment. Over C305–S645 the chain is Cytoplasmic. The Protein kinase domain occupies F348 to L619. Residues L354–V362 and K376 contribute to the ATP site. D473 functions as the Proton acceptor in the catalytic mechanism.

It belongs to the protein kinase superfamily. Ser/Thr protein kinase family. CRK subfamily.

The protein resides in the membrane. Functionally, involved in disease resistance. Required for NPR1/NH1-mediated immunity to the bacterial blight pathogen Xanthomomas oryzae pv. oryzae (Xoo). Required for the benzothiadiazole (BTH)-induced immune response. Probably regulated by the transcription factor TGA2.1. This Oryza sativa subsp. japonica (Rice) protein is Cysteine-rich receptor-like protein kinase 10.